A 123-amino-acid chain; its full sequence is Non-specific lipid-transfer protein (123 aa).

The N-terminal stretch at 1–25 (MAVKKMVEAVFVVGLVVTMMNVWGA) is a signal peptide. Disulfide bonds link Cys34–Cys82, Cys44–Cys59, Cys60–Cys104, and Cys80–Cys119.

Belongs to the plant LTP family.

In terms of biological role, plant non-specific lipid-transfer proteins transfer phospholipids as well as galactolipids across membranes. May play a role in wax or cutin deposition in the cell walls of expanding epidermal cells and certain secretory tissues. This Pinus taeda (Loblolly pine) protein is Non-specific lipid-transfer protein.